The following is a 479-amino-acid chain: Endoglucanase 20 (479 aa).

Positions 1–21 (MGKLLVLMLVGMFLAFESLEA) are cleaved as a signal peptide. N-linked (GlcNAc...) asparagine glycosylation occurs at N29. D76 (nucleophile) is an active-site residue. Residue H398 is part of the active site. Residue N442 is glycosylated (N-linked (GlcNAc...) asparagine). Active-site residues include D449 and E458.

The protein belongs to the glycosyl hydrolase 9 (cellulase E) family.

It is found in the secreted. The catalysed reaction is Endohydrolysis of (1-&gt;4)-beta-D-glucosidic linkages in cellulose, lichenin and cereal beta-D-glucans.. In Arabidopsis thaliana (Mouse-ear cress), this protein is Endoglucanase 20.